The sequence spans 1036 residues: Protein P200 (1036 aa).

A disordered region spans residues 697 to 727; the sequence is ETSELNTESDPSFEPEVEIQPEPEPNFDLET. Positions 707-727 are enriched in acidic residues; that stretch reads PSFEPEVEIQPEPEPNFDLET. Tandem repeats lie at residues 718-723, 738-743, and 776-781. The tract at residues 718–781 is 3 X 6 AA repeats of E-P-E-P-N-F; it reads EPEPNFDLET…SFESEPEPNF (64 aa). Disordered regions lie at residues 757–784 and 798–845; these read FESE…FETE and EAEV…ETEA. The segment covering 773 to 784 has biased composition (acidic residues); that stretch reads FESEPEPNFETE.

It is found in the cell projection. Its subcellular location is the attachment organelle. Its function is as follows. Protein cytoskeleton-associated which plays a role in gliding motility and perhaps also in mucociliary clearance. This Mycoplasma pneumoniae (strain ATCC 29342 / M129 / Subtype 1) (Mycoplasmoides pneumoniae) protein is Protein P200 (p200).